The following is a 498-amino-acid chain: Interferon regulatory factor 5 (498 aa).

A Phosphothreonine modification is found at Thr-10. A Nuclear localization signal motif is present at residues Pro-12–Lys-18. The segment at residues Arg-14–Ser-122 is a DNA-binding region (IRF tryptophan pentad repeat). A disordered region spans residues Cys-121 to Pro-207. A Nuclear export signal motif is present at residues Leu-150–Thr-160. The residue at position 158 (Ser-158) is a Phosphoserine; by TBK1. Residues Thr-168–Asn-206 show a composition bias toward pro residues. Ser-293 bears the Phosphoserine; by TBK1 mark. At Ser-301 the chain carries Phosphoserine. Glycyl lysine isopeptide (Lys-Gly) (interchain with G-Cter in ubiquitin) cross-links involve residues Lys-411 and Lys-412. 4 positions are modified to phosphoserine: Ser-431, Ser-435, Ser-437, and Ser-440. Phosphoserine; by IKKB is present on Ser-446. The disordered stretch occupies residues Pro-478 to Gln-498.

The protein belongs to the IRF family. Homodimer, when phosphorylated. Interacts with TASL (via pLxIS motif); interaction takes place downstream of TLR7, TLR8 or TLR9, leading to its activation. Interacts with MYD88 and TRAF6. In terms of processing, phosphorylation of serine and threonine residues by IKBKB in a C-terminal autoinhibitory region, stimulates dimerization, transport into the nucleus, assembly with the coactivator CBP/EP300 and initiation of transcription. Post-translationally, 'Lys-63'-linked polyubiquitination by TRAF6 is required for activation.

It is found in the cytoplasm. The protein resides in the nucleus. With respect to regulation, maintained as a monomer in an autoinhibited state. Phosphorylation and activation follow the following steps: innate adapter protein TASL recruits IRF5, thereby licensing IRF5 for phosphorylation by IKBKB. Phosphorylated IRF5 dissociates from the adapter proteins, dimerizes, and then enters the nucleus to induce IFNs. Its activity is regulated as follows. (Microbial infection) Activated upon coronavirus SARS-CoV-2 infection. Transcription factor that plays a critical role in innate immunity by activating expression of type I interferon (IFN) IFNA and INFB and inflammatory cytokines downstream of endolysosomal toll-like receptors TLR7, TLR8 and TLR9. Regulates the transcription of type I IFN genes (IFN-alpha and IFN-beta) and IFN-stimulated genes (ISG) by binding to an interferon-stimulated response element (ISRE) in their promoters. Can efficiently activate both the IFN-beta (IFNB) and the IFN-alpha (IFNA) genes and mediate their induction downstream of the TLR-activated, MyD88-dependent pathway. Key transcription factor regulating the IFN response during SARS-CoV-2 infection. The sequence is that of Interferon regulatory factor 5 from Homo sapiens (Human).